The sequence spans 284 residues: Distal membrane arm assembly component 2 (284 aa).

This sequence belongs to the ATP synthase subunit s family. As to quaternary structure, associates with mitochondrial complex I assembly intermediates during its biogenesis.

Its function is as follows. Involved in the assembly of the mitochondrial membrane respiratory chain NADH dehydrogenase (Complex I). This Drosophila melanogaster (Fruit fly) protein is Distal membrane arm assembly component 2.